A 155-amino-acid polypeptide reads, in one-letter code: Ribosomal RNA large subunit methyltransferase H (155 aa).

S-adenosyl-L-methionine is bound by residues L73, G104, and 123–128 (LSPLTL).

This sequence belongs to the RNA methyltransferase RlmH family. In terms of assembly, homodimer.

Its subcellular location is the cytoplasm. It catalyses the reaction pseudouridine(1915) in 23S rRNA + S-adenosyl-L-methionine = N(3)-methylpseudouridine(1915) in 23S rRNA + S-adenosyl-L-homocysteine + H(+). Its function is as follows. Specifically methylates the pseudouridine at position 1915 (m3Psi1915) in 23S rRNA. The polypeptide is Ribosomal RNA large subunit methyltransferase H (Pseudomonas putida (strain ATCC 700007 / DSM 6899 / JCM 31910 / BCRC 17059 / LMG 24140 / F1)).